The sequence spans 382 residues: MEPVIKINQGETKWDVRHKVWNYIEVKNLANFPRPVHNRIPNFKGALEACNKVAQLEIFIESAVVKVDPDKPMEGVRLAALKARKSLLVPTPRLRFGLFNRITPPKGATKETLRVCSTSQGIKEFSVPVGLDDKVQVDLVVVGSVAVSEKGYRIGKGEGFADMEYAMMACMGSVTESTWVITVVHDCQVMDIPEELIERHDLMVDFIITATRVIKTECKHPKPQGIIWSMLHKEELKKIPILKKLRTLEQEAGKDVALKLIHAGEDEYRKSKELQWQSHPKADLEFKCLASNSDRCSGFEPKFPTTTVYLSDIPPALRVSELKGLLREQEVVPLQIRWQGAKRKAFLLYADFTGAERATAILQKLFINGHTIQAKCVSSQKM.

Residues 306–382 form the RRM domain; sequence TTVYLSDIPP…QAKCVSSQKM (77 aa).

This chain is Methenyltetrahydrofolate synthase domain-containing protein (mthfsd), found in Danio rerio (Zebrafish).